Here is a 434-residue protein sequence, read N- to C-terminus: dTDP-D-glucose 4,6-dehydratase (434 aa).

Residue threonine 134 participates in substrate binding. Aspartate 135 serves as the catalytic Proton donor. Active-site proton acceptor residues include glutamate 136 and tyrosine 169. Low complexity predominate over residues 286-309 (NNNNNNNNNNNNNNNNNNNNNNNN). Positions 286–310 (NNNNNNNNNNNNNNNNNNNNNNNND) are disordered.

It belongs to the NAD(P)-dependent epimerase/dehydratase family. dTDP-glucose dehydratase subfamily. NAD(+) is required as a cofactor.

It catalyses the reaction dTDP-alpha-D-glucose = dTDP-4-dehydro-6-deoxy-alpha-D-glucose + H2O. The protein is dTDP-D-glucose 4,6-dehydratase (tgds) of Dictyostelium discoideum (Social amoeba).